A 486-amino-acid polypeptide reads, in one-letter code: Malonate-semialdehyde dehydrogenase 2 (486 aa).

Positions 154, 178, 181, 182, and 231 each coordinate NAD(+). The Nucleophile role is filled by C286. Residue E385 participates in NAD(+) binding.

It belongs to the aldehyde dehydrogenase family. IolA subfamily. Homotetramer.

It catalyses the reaction 3-oxopropanoate + NAD(+) + CoA + H2O = hydrogencarbonate + acetyl-CoA + NADH + H(+). It carries out the reaction 2-methyl-3-oxopropanoate + NAD(+) + CoA + H2O = propanoyl-CoA + hydrogencarbonate + NADH + H(+). The protein operates within polyol metabolism; myo-inositol degradation into acetyl-CoA; acetyl-CoA from myo-inositol: step 7/7. Catalyzes the oxidation of malonate semialdehyde (MSA) and methylmalonate semialdehyde (MMSA) into acetyl-CoA and propanoyl-CoA, respectively. Is involved in a myo-inositol catabolic pathway. Bicarbonate, and not CO2, is the end-product of the enzymatic reaction. This Shouchella clausii (strain KSM-K16) (Alkalihalobacillus clausii) protein is Malonate-semialdehyde dehydrogenase 2.